The following is a 67-amino-acid chain: MKNIAMKTTVVLTILLLSVLTAINADTMKKRSDYCSNDFCFFSCRRDRCARGDCENGKCVCKNCHLN.

The first 25 residues, 1-25 (MKNIAMKTTVVLTILLLSVLTAINA), serve as a signal peptide directing secretion. A propeptide spanning residues 26–31 (DTMKKR) is cleaved from the precursor. Intrachain disulfides connect C35–C54, C40–C59, C44–C61, and C49–C64.

The protein belongs to the short scorpion toxin superfamily. Potassium channel inhibitor family. As to expression, expressed by the venom gland.

It is found in the secreted. Functionally, blocks Kv1.1/KCNA1, Kv1.2/KCNA2 and Kv1.3/KCNA3 voltage-gated potassium channels. The chain is Potassium channel toxin alpha-KTx from Hoffmannihadrurus gertschi (Scorpion).